Consider the following 285-residue polypeptide: Diaminopimelate epimerase (285 aa).

Residues asparagine 14 and asparagine 67 each coordinate substrate. The active-site Proton donor is cysteine 76. Residues 77–78 (GN), asparagine 166, asparagine 199, and 217–218 (ER) each bind substrate. The Proton acceptor role is filled by cysteine 226. 227–228 (GT) provides a ligand contact to substrate.

The protein belongs to the diaminopimelate epimerase family. In terms of assembly, homodimer.

Its subcellular location is the cytoplasm. The enzyme catalyses (2S,6S)-2,6-diaminopimelate = meso-2,6-diaminopimelate. It participates in amino-acid biosynthesis; L-lysine biosynthesis via DAP pathway; DL-2,6-diaminopimelate from LL-2,6-diaminopimelate: step 1/1. Catalyzes the stereoinversion of LL-2,6-diaminopimelate (L,L-DAP) to meso-diaminopimelate (meso-DAP), a precursor of L-lysine and an essential component of the bacterial peptidoglycan. The polypeptide is Diaminopimelate epimerase (Bacillus licheniformis (strain ATCC 14580 / DSM 13 / JCM 2505 / CCUG 7422 / NBRC 12200 / NCIMB 9375 / NCTC 10341 / NRRL NRS-1264 / Gibson 46)).